The following is a 196-amino-acid chain: 3-isopropylmalate dehydratase small subunit (196 aa).

This sequence belongs to the LeuD family. LeuD type 1 subfamily. In terms of assembly, heterodimer of LeuC and LeuD.

The catalysed reaction is (2R,3S)-3-isopropylmalate = (2S)-2-isopropylmalate. It functions in the pathway amino-acid biosynthesis; L-leucine biosynthesis; L-leucine from 3-methyl-2-oxobutanoate: step 2/4. Its function is as follows. Catalyzes the isomerization between 2-isopropylmalate and 3-isopropylmalate, via the formation of 2-isopropylmaleate. The sequence is that of 3-isopropylmalate dehydratase small subunit from Streptococcus thermophilus (strain CNRZ 1066).